Here is an 830-residue protein sequence, read N- to C-terminus: BLOC-2 complex member HPS5 homolog (830 aa).

WD repeat units lie at residues 25-64, 67-106, and 114-153; these read RNNS…FLAI, SQLG…STDG, and GGPA…GRNI. The stretch at 578–604 forms a coiled coil; the sequence is DTETIVRLLRKLETLMEENEEPNARLK.

Belongs to the HPS5 family.

Functionally, has a role in the biogenesis of eye pigment granules. Eye pigment granules are specialized forms of late endosomes or lysosomes. Biogenesis of pigment granules in the eye requires molecular components required for protein delivery to lysosomes. The sequence is that of BLOC-2 complex member HPS5 homolog from Anopheles gambiae (African malaria mosquito).